A 213-amino-acid polypeptide reads, in one-letter code: Thymidylate kinase (213 aa).

10–17 (GLEGAGKT) is an ATP binding site.

Belongs to the thymidylate kinase family.

It catalyses the reaction dTMP + ATP = dTDP + ADP. In terms of biological role, phosphorylation of dTMP to form dTDP in both de novo and salvage pathways of dTTP synthesis. This Salmonella arizonae (strain ATCC BAA-731 / CDC346-86 / RSK2980) protein is Thymidylate kinase.